The following is a 542-amino-acid chain: Phosphoenolpyruvate carboxykinase (ATP) (542 aa).

Residues R67, Y208, and K214 each coordinate substrate. Residues K214, H233, and 249–257 (GLSGTGKTT) each bind ATP. Mn(2+) is bound by residues K214 and H233. D270 contacts Mn(2+). ATP is bound by residues E298, R334, 450–451 (RI), and T456. R334 is a substrate binding site.

This sequence belongs to the phosphoenolpyruvate carboxykinase (ATP) family. In terms of assembly, monomer. It depends on Mn(2+) as a cofactor.

It localises to the cytoplasm. The catalysed reaction is oxaloacetate + ATP = phosphoenolpyruvate + ADP + CO2. The protein operates within carbohydrate biosynthesis; gluconeogenesis. Its function is as follows. Involved in the gluconeogenesis. Catalyzes the conversion of oxaloacetate (OAA) to phosphoenolpyruvate (PEP) through direct phosphoryl transfer between the nucleoside triphosphate and OAA. This chain is Phosphoenolpyruvate carboxykinase (ATP), found in Vibrio campbellii (strain ATCC BAA-1116).